Consider the following 149-residue polypeptide: Transcriptional repressor NrdR (149 aa).

A zinc finger lies at cysteine 3–cysteine 34. One can recognise an ATP-cone domain in the interval proline 49 to glutamate 139.

The protein belongs to the NrdR family. Zn(2+) serves as cofactor.

Functionally, negatively regulates transcription of bacterial ribonucleotide reductase nrd genes and operons by binding to NrdR-boxes. The sequence is that of Transcriptional repressor NrdR from Yersinia enterocolitica serotype O:8 / biotype 1B (strain NCTC 13174 / 8081).